A 216-amino-acid chain; its full sequence is Redox-sensing transcriptional repressor Rex (216 aa).

Positions Val16 to Phe55 form a DNA-binding region, H-T-H motif. Gly90–Gly95 lines the NAD(+) pocket.

This sequence belongs to the transcriptional regulatory Rex family. Homodimer.

It is found in the cytoplasm. Modulates transcription in response to changes in cellular NADH/NAD(+) redox state. This is Redox-sensing transcriptional repressor Rex from Limosilactobacillus fermentum (strain NBRC 3956 / LMG 18251) (Lactobacillus fermentum).